The sequence spans 393 residues: Ninja-family protein 1 (393 aa).

Disordered regions lie at residues 1-27 (MEGF…PGQL) and 155-200 (NDDW…KEMN). Residues 156–170 (DDWKKRKEAQSLKRL) are compositionally biased toward basic and acidic residues.

It belongs to the Ninja family.

The protein resides in the nucleus. The protein is Ninja-family protein 1 of Zea mays (Maize).